We begin with the raw amino-acid sequence, 205 residues long: Guanylate kinase (205 aa).

Residues 17 to 195 enclose the Guanylate kinase-like domain; the sequence is PRLTVLSGPS…VSRELLALML (179 aa). ATP is bound at residue 24–31; that stretch reads GPSGVGKS.

This sequence belongs to the guanylate kinase family.

Its subcellular location is the cytoplasm. The catalysed reaction is GMP + ATP = GDP + ADP. Essential for recycling GMP and indirectly, cGMP. This chain is Guanylate kinase, found in Streptomyces kasugaensis.